The following is a 358-amino-acid chain: Dihydroorotate dehydrogenase (quinone) (358 aa).

FMN contacts are provided by residues 61 to 65 (AGFDK) and G85. K65 serves as a coordination point for substrate. Residue 110-114 (NRFGL) participates in substrate binding. Residues N139 and N170 each coordinate FMN. Substrate is bound at residue N170. The active-site Nucleophile is S173. N175 serves as a coordination point for substrate. FMN contacts are provided by K211 and S239. Substrate is bound at residue 240 to 241 (NT). FMN contacts are provided by residues G263, G292, and 313–314 (YS).

The protein belongs to the dihydroorotate dehydrogenase family. Type 2 subfamily. In terms of assembly, monomer. FMN serves as cofactor.

It is found in the cell membrane. The enzyme catalyses (S)-dihydroorotate + a quinone = orotate + a quinol. The protein operates within pyrimidine metabolism; UMP biosynthesis via de novo pathway; orotate from (S)-dihydroorotate (quinone route): step 1/1. In terms of biological role, catalyzes the conversion of dihydroorotate to orotate with quinone as electron acceptor. This chain is Dihydroorotate dehydrogenase (quinone), found in Methylorubrum extorquens (strain CM4 / NCIMB 13688) (Methylobacterium extorquens).